We begin with the raw amino-acid sequence, 530 residues long: Probable serine/threonine-protein kinase fnkB (530 aa).

Residues 11-268 form the Protein kinase domain; the sequence is WEIVETLKSN…SITLIDHPFL (258 aa). Residues 17–25 and Lys-43 each bind ATP; that span reads LKSNVFKVN. The Proton acceptor role is filled by Asp-131.

It belongs to the protein kinase superfamily. STE Ser/Thr protein kinase family. It depends on Mg(2+) as a cofactor.

The catalysed reaction is L-seryl-[protein] + ATP = O-phospho-L-seryl-[protein] + ADP + H(+). It catalyses the reaction L-threonyl-[protein] + ATP = O-phospho-L-threonyl-[protein] + ADP + H(+). In Dictyostelium discoideum (Social amoeba), this protein is Probable serine/threonine-protein kinase fnkB.